We begin with the raw amino-acid sequence, 497 residues long: MASAMASSALREATCTMTRLAADVAASVSSIFSCKDSAGPRPVVPATKTTSTPLDVMFFTWFAKSSGSSLPPLKVVMTGATISIDSTRGALKKLARKGIKGWLNQYMATIKEIEPIVLYEQETDARWASYSILVRVVTSDGRVSYGEAVPTLRILPVVSAVRQTARAFLGRDPHEISAAFYEWYRQDFFLSRSFESATALSAIDMALWDLKARELGAPLYELLGGKLRDRVKVYANGWYGGCRDPQCFAEKAKEVVARGYDALKFDPFGPSFNSITSEELRRAEEAVAAVRDAVGDDVDILIEHHGRFNANAAVEIAKRFEPYRPYFMEEPLHHEDIEGYRKYRSLTSARIAMGERLISAKEALQYLVEGLVDVIQPDACNIGGVTGSMKVAALAEAFSVEVSYHNAYGPVQFALEVQLSAVTPTLYRLESFYDYWPQWKRDLIGDPFRLSQSSVEVPRGPGIGVAVNERVLEKYRAEPSEIPVGEEPVWVVRGTWR.

Residue glutamate 303 coordinates Mg(2+). Histidine 305 (proton donor) is an active-site residue. The Mg(2+) site is built by glutamate 329 and glutamate 355. Histidine 405 acts as the Proton acceptor in catalysis.

The protein belongs to the mandelate racemase/muconate lactonizing enzyme family. GaD subfamily. Requires Mg(2+) as cofactor.

The enzyme catalyses D-gluconate = 2-dehydro-3-deoxy-D-gluconate + H2O. The protein operates within carbohydrate acid metabolism; D-gluconate degradation. Its function is as follows. Involved in the degradation of glucose via the Entner-Doudoroff pathway. Catalyzes the dehydration of gluconate to produce 2-keto-3-deoxygluconate (KDG). It is not able to use D-galactonate as substrate. This chain is D-gluconate dehydratase (gad), found in Thermoproteus tenax.